Reading from the N-terminus, the 301-residue chain is uncharacterized protein (301 aa).

Positions 1 to 21 are cleaved as a signal peptide; that stretch reads MKIKLILVLIVFLTIVNVNNS. N-linked (GlcNAc...) asparagine glycosylation is found at asparagine 19, asparagine 59, asparagine 102, and asparagine 180.

It localises to the secreted. This is an uncharacterized protein from Dictyostelium discoideum (Social amoeba).